The sequence spans 122 residues: Defensin-like protein 181 (122 aa).

An N-terminal signal peptide occupies residues methionine 1–alanine 26. 8 disulfides stabilise this stretch: cysteine 29–cysteine 70, cysteine 36–cysteine 55, cysteine 39–cysteine 64, cysteine 43–cysteine 66, cysteine 76–cysteine 122, cysteine 87–cysteine 107, cysteine 92–cysteine 116, and cysteine 96–cysteine 118.

It belongs to the DEFL family.

The protein localises to the secreted. Confers broad-spectrum resistance to pathogens. The chain is Defensin-like protein 181 (PDF3.1) from Arabidopsis thaliana (Mouse-ear cress).